The chain runs to 206 residues: Small ribosomal subunit protein uS4 (206 aa).

The 61-residue stretch at 96-156 folds into the S4 RNA-binding domain; it reads CRLDNVVYRM…EKAKNQLRIA (61 aa).

The protein belongs to the universal ribosomal protein uS4 family. As to quaternary structure, part of the 30S ribosomal subunit. Contacts protein S5. The interaction surface between S4 and S5 is involved in control of translational fidelity.

Its function is as follows. One of the primary rRNA binding proteins, it binds directly to 16S rRNA where it nucleates assembly of the body of the 30S subunit. In terms of biological role, with S5 and S12 plays an important role in translational accuracy. This chain is Small ribosomal subunit protein uS4, found in Azotobacter vinelandii (strain DJ / ATCC BAA-1303).